The primary structure comprises 652 residues: Trypanothione synthetase (652 aa).

One can recognise a Peptidase C51 domain in the interval 34-174; sequence SNKHDHFFSG…QHKDGVWTII (141 aa). 328–330 lines the ATP pocket; sequence RFD. 3 residues coordinate Mg(2+): D330, E344, and N346. Residues K513, K548, G555, Q583, and 618–620 each bind ATP; that span reads IIT.

It in the C-terminal section; belongs to the glutathionylspermidine synthase preATP-grasp family. Mg(2+) serves as cofactor. In terms of processing, the N-terminus is blocked.

It catalyses the reaction spermidine + glutathione + ATP = glutathionylspermidine + ADP + phosphate + H(+). The catalysed reaction is glutathionylspermidine + glutathione + ATP = trypanothione + ADP + phosphate + H(+). Its function is as follows. Conjugates glutathione (gamma-Glu-Cys-Gly) and glutathionylspermidine to form trypanothione (N(1),N(8)-bis(glutathionyl)spermidine), which is involved in maintaining intracellular thiol redox and in defense against oxidants. The chain is Trypanothione synthetase (TRS) from Crithidia fasciculata.